The following is an 89-amino-acid chain: Small ribosomal subunit protein uS15 (89 aa).

It belongs to the universal ribosomal protein uS15 family. Part of the 30S ribosomal subunit. Forms a bridge to the 50S subunit in the 70S ribosome, contacting the 23S rRNA.

One of the primary rRNA binding proteins, it binds directly to 16S rRNA where it helps nucleate assembly of the platform of the 30S subunit by binding and bridging several RNA helices of the 16S rRNA. Its function is as follows. Forms an intersubunit bridge (bridge B4) with the 23S rRNA of the 50S subunit in the ribosome. This chain is Small ribosomal subunit protein uS15, found in Klebsiella pneumoniae (strain 342).